Consider the following 266-residue polypeptide: Energy-coupling factor transporter transmembrane protein EcfT 1 (266 aa).

The next 5 membrane-spanning stretches (helical) occupy residues 33–53, 73–93, 107–127, 152–172, and 243–263; these read IGIL…LFTL, LIWL…GGTI, LLNG…STVI, VPVN…PTLM, and HFGD…LVIL.

Belongs to the energy-coupling factor EcfT family. Forms a stable energy-coupling factor (ECF) transporter complex composed of 2 membrane-embedded substrate-binding proteins (S component), 2 ATP-binding proteins (A component) and 2 transmembrane proteins (T component). May be able to interact with more than 1 S component at a time.

The protein localises to the cell membrane. Transmembrane (T) component of an energy-coupling factor (ECF) ABC-transporter complex. Unlike classic ABC transporters this ECF transporter provides the energy necessary to transport a number of different substrates. This chain is Energy-coupling factor transporter transmembrane protein EcfT 1, found in Listeria monocytogenes serotype 1/2a (strain 08-5578).